Consider the following 92-residue polypeptide: Small ribosomal subunit protein uS19 (92 aa).

This sequence belongs to the universal ribosomal protein uS19 family.

In terms of biological role, protein S19 forms a complex with S13 that binds strongly to the 16S ribosomal RNA. The chain is Small ribosomal subunit protein uS19 from Jannaschia sp. (strain CCS1).